A 482-amino-acid polypeptide reads, in one-letter code: MFS-type transporter cnsL (482 aa).

The helical transmembrane segment at 73–93 threads the bilayer; it reads LFVCATLSGLDKTAISAAAVY. Asn-100 carries an N-linked (GlcNAc...) asparagine glycan. 9 consecutive transmembrane segments (helical) span residues 108-128, 131-151, 170-190, 199-219, 304-324, 333-353, 361-381, 392-412, and 426-446; these read WIGS…AYCL, VPAV…EMSV, IILN…VGYY, IIFL…YFVL, LLAM…SYLA, AIVT…YALP, LVGL…VSVY, ITLY…GPQT, and VAMI…GVVC.

This sequence belongs to the major facilitator superfamily. Allantoate permease family.

It is found in the cell membrane. MFS-type transporter; part of the gene cluster that mediates the biosynthesis of communesins, a prominent class of indole alkaloids with great potential as pharmaceuticals. With the MFS transporter cnsO, is most likely responsible for cummunesins secretion and thereby may contribute to intrinsic resistance. The chain is MFS-type transporter cnsL from Penicillium expansum (Blue mold rot fungus).